The chain runs to 354 residues: Holliday junction branch migration complex subunit RuvB (354 aa).

The tract at residues 1–24 (MSIQTDDFAPVPPPKRVVSAAPTS) is disordered. The interval 5-195 (TDDFAPVPPP…FGIVARLEFY (191 aa)) is large ATPase domain (RuvB-L). ATP contacts are provided by residues L34, R35, G76, K79, T80, T81, 142–144 (EDY), R185, Y195, and R232. Position 80 (T80) interacts with Mg(2+). Positions 196–266 (TPEELSRIVT…IAQRALAMLD (71 aa)) are small ATPAse domain (RuvB-S). A head domain (RuvB-H) region spans residues 269 to 354 (PQGFDVMDRK…RQHTDLFGPA (86 aa)). Residues R324 and R329 each contribute to the DNA site.

It belongs to the RuvB family. In terms of assembly, homohexamer. Forms an RuvA(8)-RuvB(12)-Holliday junction (HJ) complex. HJ DNA is sandwiched between 2 RuvA tetramers; dsDNA enters through RuvA and exits via RuvB. An RuvB hexamer assembles on each DNA strand where it exits the tetramer. Each RuvB hexamer is contacted by two RuvA subunits (via domain III) on 2 adjacent RuvB subunits; this complex drives branch migration. In the full resolvosome a probable DNA-RuvA(4)-RuvB(12)-RuvC(2) complex forms which resolves the HJ.

The protein resides in the cytoplasm. It catalyses the reaction ATP + H2O = ADP + phosphate + H(+). In terms of biological role, the RuvA-RuvB-RuvC complex processes Holliday junction (HJ) DNA during genetic recombination and DNA repair, while the RuvA-RuvB complex plays an important role in the rescue of blocked DNA replication forks via replication fork reversal (RFR). RuvA specifically binds to HJ cruciform DNA, conferring on it an open structure. The RuvB hexamer acts as an ATP-dependent pump, pulling dsDNA into and through the RuvAB complex. RuvB forms 2 homohexamers on either side of HJ DNA bound by 1 or 2 RuvA tetramers; 4 subunits per hexamer contact DNA at a time. Coordinated motions by a converter formed by DNA-disengaged RuvB subunits stimulates ATP hydrolysis and nucleotide exchange. Immobilization of the converter enables RuvB to convert the ATP-contained energy into a lever motion, pulling 2 nucleotides of DNA out of the RuvA tetramer per ATP hydrolyzed, thus driving DNA branch migration. The RuvB motors rotate together with the DNA substrate, which together with the progressing nucleotide cycle form the mechanistic basis for DNA recombination by continuous HJ branch migration. Branch migration allows RuvC to scan DNA until it finds its consensus sequence, where it cleaves and resolves cruciform DNA. In Paracidovorax citrulli (strain AAC00-1) (Acidovorax citrulli), this protein is Holliday junction branch migration complex subunit RuvB.